The following is a 419-amino-acid chain: Coiled-coil domain-containing protein 85C (419 aa).

Alanine 2 carries the N-acetylalanine modification. 2 coiled-coil regions span residues 22–88 (ELLR…RELC) and 118–159 (HEVA…AALA). Disordered regions lie at residues 162–268 (GAAS…DPSS) and 307–348 (HSES…AGQK). Over residues 164-175 (ASGGGGGGGGAG) the composition is skewed to gly residues. The span at 176–189 (SRSSIDSQASLSGP) shows a compositional bias: low complexity. Residue serine 178 is modified to Phosphoserine. Over residues 224–233 (PPPLLPPGPH) the composition is skewed to pro residues. The residue at position 246 (serine 246) is a Phosphoserine. Residues 307-325 (HSESQLASLPPSYQDSLQN) are compositionally biased toward polar residues. Residues 329–338 (CPAPELPSPP) are compositionally biased toward pro residues.

It belongs to the CCDC85 family. As to quaternary structure, may interact with ARVCF, CTNND1, CTNND2 and PKP4.

The protein localises to the cell junction. The protein resides in the tight junction. It is found in the adherens junction. In terms of biological role, may play a role in cell-cell adhesion and epithelium development through its interaction with proteins of the beta-catenin family. May play an important role in cortical development, especially in the maintenance of radial glia. This is Coiled-coil domain-containing protein 85C (CCDC85C) from Homo sapiens (Human).